The sequence spans 330 residues: Tryptophan--tRNA ligase (330 aa).

ATP-binding positions include 10 to 12 (QAT) and 18 to 19 (GN). A 'HIGH' region motif is present at residues 11 to 19 (ATGSLHLGN). An L-tryptophan-binding site is contributed by D134. Residues 146–148 (GED), I186, and 195–199 (KMSKS) each bind ATP. The 'KMSKS' region motif lies at 195-199 (KMSKS).

The protein belongs to the class-I aminoacyl-tRNA synthetase family. In terms of assembly, homodimer.

Its subcellular location is the cytoplasm. The catalysed reaction is tRNA(Trp) + L-tryptophan + ATP = L-tryptophyl-tRNA(Trp) + AMP + diphosphate + H(+). Catalyzes the attachment of tryptophan to tRNA(Trp). This Rickettsia felis (strain ATCC VR-1525 / URRWXCal2) (Rickettsia azadi) protein is Tryptophan--tRNA ligase.